The primary structure comprises 505 residues: Glycerol kinase (505 aa).

Thr-12 provides a ligand contact to ADP. ATP contacts are provided by Thr-12, Thr-13, and Ser-14. Thr-12 is a binding site for sn-glycerol 3-phosphate. Position 16 (Arg-16) interacts with ADP. Sn-glycerol 3-phosphate is bound by residues Arg-82, Glu-83, Tyr-134, and Asp-246. The glycerol site is built by Arg-82, Glu-83, Tyr-134, Asp-246, and Gln-247. Residues Thr-268 and Gly-312 each coordinate ADP. ATP is bound by residues Thr-268, Gly-312, Gln-316, and Gly-413. Residues Gly-413 and Asn-417 each coordinate ADP.

Belongs to the FGGY kinase family.

It catalyses the reaction glycerol + ATP = sn-glycerol 3-phosphate + ADP + H(+). Its pathway is polyol metabolism; glycerol degradation via glycerol kinase pathway; sn-glycerol 3-phosphate from glycerol: step 1/1. Inhibited by fructose 1,6-bisphosphate (FBP). Key enzyme in the regulation of glycerol uptake and metabolism. Catalyzes the phosphorylation of glycerol to yield sn-glycerol 3-phosphate. The polypeptide is Glycerol kinase (Beutenbergia cavernae (strain ATCC BAA-8 / DSM 12333 / CCUG 43141 / JCM 11478 / NBRC 16432 / NCIMB 13614 / HKI 0122)).